Consider the following 429-residue polypeptide: Carboxypeptidase B (429 aa).

Residues 1 to 15 (MKFLLVLALCAVVYA) form the signal peptide. In terms of domain architecture, Peptidase M14 spans 121–423 (NYQELEVIDE…EGIVVGARRA (303 aa)). The Zn(2+) site is built by H182 and E185. Substrate contacts are provided by residues 182-185 (HARE), R236, and 256-257 (NR). An intrachain disulfide couples C250 to C273. Residue H309 participates in Zn(2+) binding. Substrate contacts are provided by residues 310–311 (SF) and Y365. E387 functions as the Proton donor/acceptor in the catalytic mechanism.

It belongs to the peptidase M14 family. Zn(2+) serves as cofactor.

The protein resides in the secreted. It carries out the reaction Preferential release of a C-terminal lysine or arginine amino acid.. Its activity is regulated as follows. Highly resistant to inhibition by potato carboxypeptidase inhibitor (PCI). Moderately inhibited by leech carboxypeptidase inhibitor (LCI) and tick carboxypeptidase inhibitor (TCI). Functionally, metalloprotease which cleaves a single amino acid from the C-terminal end of polypeptide chains. Shows a strong preference for peptides with a terminal lysine residue. The protein is Carboxypeptidase B of Helicoverpa zea (Corn earworm moth).